The following is a 1500-amino-acid chain: DNA-directed RNA polymerase subunit beta' (1500 aa).

Residues Cys60, Cys62, Cys75, and Cys78 each contribute to the Zn(2+) site. Residues 180–199 (DLGGMETAQRSTQRQIEEDY) form a disordered region. Mg(2+) is bound by residues Asp626, Asp628, and Asp630. Zn(2+)-binding residues include Cys1002, Cys1075, Cys1082, and Cys1085. The disordered stretch occupies residues 1440–1500 (EVQQAEKSAE…DSDHPDLSSL (61 aa)). Over residues 1449–1468 (EPTTTALPTTNGHQAPQSDT) the composition is skewed to polar residues.

The protein belongs to the RNA polymerase beta' chain family. In terms of assembly, the RNAP catalytic core consists of 2 alpha, 1 beta, 1 beta' and 1 omega subunit. When a sigma factor is associated with the core the holoenzyme is formed, which can initiate transcription. Mg(2+) is required as a cofactor. The cofactor is Zn(2+).

The catalysed reaction is RNA(n) + a ribonucleoside 5'-triphosphate = RNA(n+1) + diphosphate. DNA-dependent RNA polymerase catalyzes the transcription of DNA into RNA using the four ribonucleoside triphosphates as substrates. The polypeptide is DNA-directed RNA polymerase subunit beta' (Chloroflexus aggregans (strain MD-66 / DSM 9485)).